Here is a 310-residue protein sequence, read N- to C-terminus: Zinc transporter ZIP9 (310 aa).

The next 8 membrane-spanning stretches (helical) occupy residues 7–27 (ISLL…IPLA), 35–55 (LKLI…AVII), 108–128 (ACIG…DQIG), 148–168 (ITTT…LGAA), 178–198 (LIVF…LVSF), 212–232 (HLLV…LGLS), 246–266 (GVAM…HVLP), and 289–309 (VEVV…VGHH).

This sequence belongs to the ZIP transporter (TC 2.A.5) family. Expressed in brain, liver, ovary, and testis.

It localises to the golgi apparatus. The protein localises to the trans-Golgi network membrane. It is found in the cell membrane. The protein resides in the cytoplasm. Its subcellular location is the perinuclear region. It localises to the mitochondrion. The protein localises to the nucleus. The enzyme catalyses Zn(2+)(in) = Zn(2+)(out). Its function is as follows. Has dual functions as a membrane-bound androgen receptor and as an androgen-dependent zinc transporter both of which are mediated through G protein activation and are required for the androgen-dependent apoptotic response. Upon androgen binding, mediates apoptosis by directly activating a stimulatory G protein that leads to increased cAMP levels and MAP kinase activity and which is accompanied by increased intracellular free zinc levels. The chain is Zinc transporter ZIP9 from Micropogonias undulatus (Atlantic croaker).